We begin with the raw amino-acid sequence, 242 residues long: Orotidine 5'-phosphate decarboxylase (242 aa).

Residues Asp-16, Lys-37, 64–73, Thr-128, Arg-190, Gln-199, Gly-219, and Arg-220 contribute to the substrate site; that span reads DLKFHDIPNT. The Proton donor role is filled by Lys-66.

This sequence belongs to the OMP decarboxylase family. Type 1 subfamily. As to quaternary structure, homodimer.

It catalyses the reaction orotidine 5'-phosphate + H(+) = UMP + CO2. It functions in the pathway pyrimidine metabolism; UMP biosynthesis via de novo pathway; UMP from orotate: step 2/2. Functionally, catalyzes the decarboxylation of orotidine 5'-monophosphate (OMP) to uridine 5'-monophosphate (UMP). In Prochlorococcus marinus (strain MIT 9215), this protein is Orotidine 5'-phosphate decarboxylase.